The sequence spans 371 residues: Glutamate 5-kinase (371 aa).

ATP is bound at residue Lys-14. Substrate-binding residues include Ser-52, Asp-139, and Asn-151. Residue Ser-171–Asp-172 participates in ATP binding. The PUA domain maps to Glu-275–Ser-353.

The protein belongs to the glutamate 5-kinase family.

It is found in the cytoplasm. The catalysed reaction is L-glutamate + ATP = L-glutamyl 5-phosphate + ADP. It participates in amino-acid biosynthesis; L-proline biosynthesis; L-glutamate 5-semialdehyde from L-glutamate: step 1/2. Functionally, catalyzes the transfer of a phosphate group to glutamate to form L-glutamate 5-phosphate. The chain is Glutamate 5-kinase from Frankia casuarinae (strain DSM 45818 / CECT 9043 / HFP020203 / CcI3).